The following is a 1148-amino-acid chain: Envelopment polyprotein (1148 aa).

The first 23 residues, M1–A23, serve as a signal peptide directing secretion. The Lumenal segment spans residues A24–L496. 6 disulfide bridges follow: C34-C159, C68-C165, C117-C136, C141-C146, C183-C193, and C218-C257. Residue N142 is glycosylated (N-linked (GlcNAc...) asparagine; by host). The N-linked (GlcNAc...) asparagine; by host glycan is linked to N357. 4 cysteine pairs are disulfide-bonded: C386-C445, C390-C399, C415-C434, and C462-C485. N409 carries N-linked (GlcNAc...) asparagine; by host glycosylation. The chain crosses the membrane as a helical span at residues L497–K517. Residues I518–F637 lie on the Cytoplasmic side of the membrane. The tract at residues C526–K543 is binding to the ribonucleoprotein. 2 CCHC-type zinc fingers span residues C555–C575 and C580–C601. Binding to the ribonucleoprotein stretches follow at residues F598–L615, K602–K613, and M621–S635. Residues M621–C644 form the ITAM domain. Positions Y625–L628 match the YxxL motif. A helical membrane pass occupies residues F638–A658. Residues E659–W1115 are Lumenal-facing. 8 disulfide bridges follow: C745-C780, C749-C787, C761-C894, C775-C905, C790-C913, C816-C825, C833-C842, and C873-C877. Residues Y767–C787 form a fusion loop region. The N-linked (GlcNAc...) asparagine; by host glycan is linked to N937. Disulfide bonds link C979-C1009, C1002-C1054, C1019-C1024, C1055-C1060, and C1094-C1098. The helical transmembrane segment at M1116 to C1136 threads the bilayer. Binding to the ribonucleoprotein stretches follow at residues L1131–R1143 and L1131–P1148. Over P1137–P1148 the chain is Cytoplasmic.

It belongs to the hantavirus envelope glycoprotein family. Homodimer. Homotetramer; forms heterotetrameric Gn-Gc spikes in the pre-fusion conformation. Interacts (via C-terminus) with the nucleoprotein. Interacts with host TUFM; this interaction contributes to the virus-induced degradation of mitochondria by autophagy, which leads to degradation of host MAVS and inhibition of type I interferon (IFN) responses. Interacts with host MAP1LC3B; this interaction contributes to the virus-induced degradation of mitochondria by autophagy, which leads to degradation of host MAVS and inhibition of type I interferon (IFN) responses. As to quaternary structure, homodimer. Homotetramer; forms heterotetrameric Gn-Gc spikes in the pre-fusion conformation. Homotrimer; forms homotrimer in the post-fusion conformation at acidic pH. Interacts (via C-terminus) with the nucleoprotein. Envelope polyprotein precursor is quickly cleaved in vivo just after synthesis, presumably by host signal peptidase.

It is found in the virion membrane. It localises to the host cell surface. Its subcellular location is the host Golgi apparatus membrane. The protein resides in the host endoplasmic reticulum membrane. The protein localises to the host mitochondrion. Functionally, forms homotetramers with glycoprotein C at the surface of the virion. Attaches the virion to host cell receptors including integrin ITGAV/ITGB3. This attachment induces virion internalization predominantly through clathrin-dependent endocytosis. Mediates the assembly and budding of infectious virus particles through its interaction with the nucleocapsid protein and the viral genome. May dysregulate normal immune and endothelial cell responses through an ITAM motif. Translocates to mitochondria, binds to host TUFM and recruits MAP1LC3B. These interactions induce mitochondrial autophagy and therefore destruction of host MAVS leading to inhibition of type I interferon (IFN) responses. Concomitant breakdown of glycoprotein N is apparently prevented by the nucleoprotein that may inhibit Gn-stimulated autophagosome-lysosome fusion. Interacts with the viral genomic RNA. Its function is as follows. Forms homotetramers with glycoprotein N at the surface of the virion. Attaches the virion to host cell receptors including integrin ITGAV/ITGB3. This attachment induces virion internalization predominantly through clathrin-dependent endocytosis. Class II fusion protein that promotes fusion of viral membrane with host endosomal membrane after endocytosis of the virion. This chain is Envelopment polyprotein (GP), found in Homo sapiens (Human).